The sequence spans 24 residues: Unknown protein 3 (24 aa).

The chain is Unknown protein 3 from Pseudotsuga menziesii (Douglas-fir).